An 84-amino-acid polypeptide reads, in one-letter code: uncharacterized protein (84 aa).

This is an uncharacterized protein from Vaccinia virus (strain Copenhagen) (VACV).